Reading from the N-terminus, the 271-residue chain is Tryptophan synthase alpha chain (271 aa).

Catalysis depends on proton acceptor residues glutamate 49 and aspartate 60.

Belongs to the TrpA family. As to quaternary structure, tetramer of two alpha and two beta chains.

The catalysed reaction is (1S,2R)-1-C-(indol-3-yl)glycerol 3-phosphate + L-serine = D-glyceraldehyde 3-phosphate + L-tryptophan + H2O. It participates in amino-acid biosynthesis; L-tryptophan biosynthesis; L-tryptophan from chorismate: step 5/5. In terms of biological role, the alpha subunit is responsible for the aldol cleavage of indoleglycerol phosphate to indole and glyceraldehyde 3-phosphate. The protein is Tryptophan synthase alpha chain of Leptothrix cholodnii (strain ATCC 51168 / LMG 8142 / SP-6) (Leptothrix discophora (strain SP-6)).